The chain runs to 177 residues: Adenine phosphoribosyltransferase (177 aa).

It belongs to the purine/pyrimidine phosphoribosyltransferase family. Homodimer.

The protein resides in the cytoplasm. The enzyme catalyses AMP + diphosphate = 5-phospho-alpha-D-ribose 1-diphosphate + adenine. It functions in the pathway purine metabolism; AMP biosynthesis via salvage pathway; AMP from adenine: step 1/1. Catalyzes a salvage reaction resulting in the formation of AMP, that is energically less costly than de novo synthesis. The polypeptide is Adenine phosphoribosyltransferase (Chlorobaculum tepidum (strain ATCC 49652 / DSM 12025 / NBRC 103806 / TLS) (Chlorobium tepidum)).